The sequence spans 108 residues: Monothiol bacilliredoxin BrxC (108 aa).

Cys31 is subject to S-bacillithiol cysteine disulfide.

As to quaternary structure, interacts with AbrB, BdhA, Bdr, BrxB, FolD, GapA, GapB, GatA, PfkA, PyrAA, PyrAB, PyrE, PyrG, PyrH, RpsB, RpsK, RpsL, SalA, SucC, Tuf and YtsJ. Post-translationally, cys can react with bacillithiol (BSH) to form mixed disulfides. S-bacillithiolation protects Cys residues against overoxidation by acting as a redox switch in response to oxidative stress.

S-bacillithiolation is the formation of mixed disulfide bonds between protein thiols and the general thiol reductant bacillithiol (BSH) under oxidative stress. BSH is an equivalent of glutathione (GSH) in Firmicutes. This protein is a monothiol bacilliredoxin, which debacillithiolates (removes BSH) the S-bacillithiolated glyceraldehyde-3-phosphate dehydrogenases (GAPDHs) GapA and GapB in vivo and probably a number of other oxidized cytosolic proteins. Debacillithiolates the S-bacillithiolated Bdr (Bdr-SSB) and BrxB (BrxB-SSB) in vitro. Involved in maintaining redox homeostasis in response to disulfide stress conditions. The chain is Monothiol bacilliredoxin BrxC from Bacillus subtilis (strain 168).